The sequence spans 494 residues: MANYFNTLNLREQLDQLGRCRFMDREEFTTEAEYLEGKKIVIVGCGAQGLNQGLNMRDSGLDVSYALRQAAIDEKRQSFKNADENGFVVGSYETLIPQADLVINLTPDKQHTNVVETVMPLMKEGAALGYSHGFNVVEEGMQLRADLTVVMVAPKCPGSEVREEYKRGFGVPTLIAVHPENDPKGEGWDIAKAWAAGTGGHRAGCLESSFVAEVKSDLMGEQTILCGMLQAGSIVSYEKMIADGIEPGYAGKLLQYGWETITEALKFGGVTHMMDRLSNPAKVKAFELSEELKDLMRPLYNKHMDDIISGHFSSTMMADWANDDVNLLGWREETGETAFENYPASDVEISEQEYFDNGILMVAMVRAGVELAFEAMTASGIIDESAYYESLHELPLIANTVARKRLYEMNVVISDTAEYGNYLFANVATPLLREKFMPSVATDVIGRGLGGTSNQVDNAKLIEVNEAIRNHPVEYIGEELRSYMSDMKRIAVGG.

One can recognise a KARI N-terminal Rossmann domain in the interval 14–208 (LDQLGRCRFM…GGHRAGCLES (195 aa)). NADP(+) contacts are provided by residues 45–48 (CGAQ), R68, R76, S78, and 108–110 (DKQ). The active site involves H132. Residue G158 participates in NADP(+) binding. KARI C-terminal knotted domains follow at residues 209-344 (SFVA…NYPA) and 345-487 (SDVE…MSDM). Mg(2+)-binding residues include D217, E221, E389, and E393. Position 414 (S414) interacts with substrate.

The protein belongs to the ketol-acid reductoisomerase family. Mg(2+) is required as a cofactor.

It catalyses the reaction (2R)-2,3-dihydroxy-3-methylbutanoate + NADP(+) = (2S)-2-acetolactate + NADPH + H(+). It carries out the reaction (2R,3R)-2,3-dihydroxy-3-methylpentanoate + NADP(+) = (S)-2-ethyl-2-hydroxy-3-oxobutanoate + NADPH + H(+). Its pathway is amino-acid biosynthesis; L-isoleucine biosynthesis; L-isoleucine from 2-oxobutanoate: step 2/4. It participates in amino-acid biosynthesis; L-valine biosynthesis; L-valine from pyruvate: step 2/4. Functionally, involved in the biosynthesis of branched-chain amino acids (BCAA). Catalyzes an alkyl-migration followed by a ketol-acid reduction of (S)-2-acetolactate (S2AL) to yield (R)-2,3-dihydroxy-isovalerate. In the isomerase reaction, S2AL is rearranged via a Mg-dependent methyl migration to produce 3-hydroxy-3-methyl-2-ketobutyrate (HMKB). In the reductase reaction, this 2-ketoacid undergoes a metal-dependent reduction by NADPH to yield (R)-2,3-dihydroxy-isovalerate. The sequence is that of Ketol-acid reductoisomerase (NADP(+)) from Vibrio atlanticus (strain LGP32) (Vibrio splendidus (strain Mel32)).